Consider the following 843-residue polypeptide: Protein P (843 aa).

Positions 1–177 (MPLSYQHFRK…FCGSPYSWEQ (177 aa)) are terminal protein domain (TP). The segment at 178-346 (ELQHGRLVFQ…YCLSHIVNLL (169 aa)) is spacer. The polymerase/reverse transcriptase domain (RT) stretch occupies residues 347–690 (EDWGPCTEHG…YMNLYPVARQ (344 aa)). The 244-residue stretch at 357–600 (EHHIRIPRTP…YSLNFMGYVI (244 aa)) folds into the Reverse transcriptase domain. Mg(2+)-binding residues include Asp429, Asp551, and Asp552.

This sequence belongs to the hepadnaviridae P protein family.

It catalyses the reaction DNA(n) + a 2'-deoxyribonucleoside 5'-triphosphate = DNA(n+1) + diphosphate. The catalysed reaction is Endonucleolytic cleavage to 5'-phosphomonoester.. Its activity is regulated as follows. Activated by host HSP70 and HSP40 in vitro to be able to bind the epsilon loop of the pgRNA. Because deletion of the RNase H region renders the protein partly chaperone-independent, the chaperones may be needed indirectly to relieve occlusion of the RNA-binding site by this domain. Inhibited by several reverse-transcriptase inhibitors: Lamivudine, Adefovir and Entecavir. Its function is as follows. Multifunctional enzyme that converts the viral RNA genome into dsDNA in viral cytoplasmic capsids. This enzyme displays a DNA polymerase activity that can copy either DNA or RNA templates, and a ribonuclease H (RNase H) activity that cleaves the RNA strand of RNA-DNA heteroduplexes in a partially processive 3'- to 5'-endonucleasic mode. Neo-synthesized pregenomic RNA (pgRNA) are encapsidated together with the P protein, and reverse-transcribed inside the nucleocapsid. Initiation of reverse-transcription occurs first by binding the epsilon loop on the pgRNA genome, and is initiated by protein priming, thereby the 5'-end of (-)DNA is covalently linked to P protein. Partial (+)DNA is synthesized from the (-)DNA template and generates the relaxed circular DNA (RC-DNA) genome. After budding and infection, the RC-DNA migrates in the nucleus, and is converted into a plasmid-like covalently closed circular DNA (cccDNA). The activity of P protein does not seem to be necessary for cccDNA generation, and is presumably released from (+)DNA by host nuclear DNA repair machinery. This Homo sapiens (Human) protein is Protein P.